A 257-amino-acid polypeptide reads, in one-letter code: UPF0246 protein PC1_3665 (257 aa).

This sequence belongs to the UPF0246 family.

This is UPF0246 protein PC1_3665 from Pectobacterium carotovorum subsp. carotovorum (strain PC1).